The chain runs to 1899 residues: Protein TIC 214 (1899 aa).

Helical transmembrane passes span 23–43, 64–84, 87–107, 124–144, 172–192, and 217–237; these read VVVG…SYLF, FITG…HLAL, PHTI…WNNH, LSIQ…LFIL, VGWL…LVCI, and WTAR…LGVH. Disordered stretches follow at residues 256-280 and 1581-1619; these read EQKK…TKKE and PKDY…GLDL. The span at 269–280 shows a compositional bias: basic and acidic residues; it reads EKTFETKETKKE.

Belongs to the TIC214 family. As to quaternary structure, part of the Tic complex.

It is found in the plastid. The protein localises to the chloroplast inner membrane. In terms of biological role, involved in protein precursor import into chloroplasts. May be part of an intermediate translocation complex acting as a protein-conducting channel at the inner envelope. The polypeptide is Protein TIC 214 (Ceratophyllum demersum (Rigid hornwort)).